Here is a 348-residue protein sequence, read N- to C-terminus: Methylthioribose-1-phosphate isomerase (348 aa).

Substrate is bound by residues 48–50 (RGA), arginine 90, and glutamine 195. The active-site Proton donor is the aspartate 236. 246–247 (NK) lines the substrate pocket.

The protein belongs to the eIF-2B alpha/beta/delta subunits family. MtnA subfamily.

The enzyme catalyses 5-(methylsulfanyl)-alpha-D-ribose 1-phosphate = 5-(methylsulfanyl)-D-ribulose 1-phosphate. Its pathway is amino-acid biosynthesis; L-methionine biosynthesis via salvage pathway; L-methionine from S-methyl-5-thio-alpha-D-ribose 1-phosphate: step 1/6. Its function is as follows. Catalyzes the interconversion of methylthioribose-1-phosphate (MTR-1-P) into methylthioribulose-1-phosphate (MTRu-1-P). The chain is Methylthioribose-1-phosphate isomerase from Exiguobacterium sibiricum (strain DSM 17290 / CCUG 55495 / CIP 109462 / JCM 13490 / 255-15).